A 637-amino-acid chain; its full sequence is Dihydrolipoyllysine-residue acetyltransferase component of pyruvate dehydrogenase complex, mitochondrial (637 aa).

The transit peptide at 1–85 (MWRVCVRRAQ…LLGSPGRRSY (85 aa)) directs the protein to the mitochondrion. The tract at residues 80–100 (PGRRSYSLPPHQKVPLPSLSP) is disordered. Positions 90–166 (HQKVPLPSLS…PIGSIICITV (77 aa)) constitute a Lipoyl-binding 1 domain. A Phosphoserine modification is found at S99. K131 is subject to N6-lipoyllysine. Disordered stretches follow at residues 189 to 219 (QAAA…PPHM) and 307 to 340 (LKPQ…PAGP). The segment covering 201 to 211 (AAPTAPSAKAP) has biased composition (low complexity). In terms of domain architecture, Lipoyl-binding 2 spans 218–287 (HMQVSAVGEQ…PLGAPLCIIV (70 aa)). The segment covering 310 to 321 (QAPPPVPPPVAA) has biased composition (pro residues). Positions 322–333 (APPTAQPLAPTP) are enriched in low complexity. The region spanning 345–382 (FVSPLAKKLAAERGIDLTQVKGTGPEGRIIKKDIDSFV) is the Peripheral subunit-binding (PSBD) domain. R451 contacts CoA. K456 is subject to N6-acetyllysine. K463 is modified (N6-succinyllysine). CoA is bound at residue S465. An N6-succinyllysine modification is found at K537. The CoA site is built by S556, N557, and G581. Catalysis depends on residues H610 and D614.

Belongs to the 2-oxoacid dehydrogenase family. Part of the pyruvate dehydrogenase complex (PDHc) that is a multi-enzyme complex composed of multiple copies of three enzymes, pyruvate dehydrogenase (subunits PDH1A and PDHB, E1 component), dihydrolipoamide acetyltransferase (DLAT, E2 component), and dihydrolipoamide dehydrogenase (DLD, E3 component) to which is added an additional protein the E3-binding protein (PDHX, E3BP). In terms of structural architecture, the E2 and E3BP components assemble into a 60meric central core with icosahedral symmetry. The central core is decorated with E1 and E3 proteins. Currently, two alternative models for the E2:E3BP stoichiometry are considered as being either 48:12 (E2(48)-E3BP(12)) or 40:20 (E2(40)-E3BP(20)). Interacts with PDK2 and PDK3. Interacts with SIRT4. Interacts with PDHB. It depends on (R)-lipoate as a cofactor. Post-translationally, delipoylated at Lys-131 by SIRT4, delipoylation decreases the PHD complex activity. As to expression, detected at higher levels in cauda epididymal spermatazoa than in caput epididymal spermatazoa (at protein level).

The protein resides in the mitochondrion matrix. It catalyses the reaction N(6)-[(R)-dihydrolipoyl]-L-lysyl-[protein] + acetyl-CoA = N(6)-[(R)-S(8)-acetyldihydrolipoyl]-L-lysyl-[protein] + CoA. In terms of biological role, as part of the pyruvate dehydrogenase complex, catalyzes the transfers of an acetyl group to a lipoic acid moiety. The pyruvate dehydrogenase complex, catalyzes the overall conversion of pyruvate to acetyl-CoA and CO(2), and thereby links cytoplasmic glycolysis and the mitochondrial tricarboxylic acid (TCA) cycle. The protein is Dihydrolipoyllysine-residue acetyltransferase component of pyruvate dehydrogenase complex, mitochondrial of Mesocricetus auratus (Golden hamster).